Here is a 187-residue protein sequence, read N- to C-terminus: dCTP deaminase (187 aa).

DCTP is bound by residues 107 to 112 (KSTYAR), 131 to 133 (TLE), Gln152, Tyr166, Lys175, and Gln176. The Proton donor/acceptor role is filled by Glu133.

This sequence belongs to the dCTP deaminase family. Homotrimer.

The enzyme catalyses dCTP + H2O + H(+) = dUTP + NH4(+). It participates in pyrimidine metabolism; dUMP biosynthesis; dUMP from dCTP (dUTP route): step 1/2. In terms of biological role, catalyzes the deamination of dCTP to dUTP. The chain is dCTP deaminase from Ehrlichia canis (strain Jake).